The sequence spans 452 residues: Sulfide:quinone oxidoreductase, mitochondrial (452 aa).

FAD is bound by residues 54-55 (AG), Glu-77, Gln-85, and Val-120. Catalysis depends on Cys-204, which acts as the Cysteine persulfide intermediate. Residues Cys-204 and Cys-380 are joined by a disulfide bond. FAD-binding positions include Asp-337 and 345-348 (KTAA). The active-site Cysteine persulfide intermediate is the Cys-380.

Belongs to the SQRD family. It depends on FAD as a cofactor.

It is found in the mitochondrion. It catalyses the reaction ubiquinone-10 + hydrogen sulfide + sulfite + 2 H(+) = ubiquinol-10 + thiosulfate. The catalysed reaction is a quinone + hydrogen sulfide + glutathione + H(+) = S-sulfanylglutathione + a quinol. Its function is as follows. Catalyzes the oxidation of hydrogen sulfide, with the help of a quinone. The polypeptide is Sulfide:quinone oxidoreductase, mitochondrial (Dictyostelium discoideum (Social amoeba)).